Here is a 476-residue protein sequence, read N- to C-terminus: Aspartyl/glutamyl-tRNA(Asn/Gln) amidotransferase subunit B (476 aa).

Belongs to the GatB/GatE family. GatB subfamily. In terms of assembly, heterotrimer of A, B and C subunits.

It carries out the reaction L-glutamyl-tRNA(Gln) + L-glutamine + ATP + H2O = L-glutaminyl-tRNA(Gln) + L-glutamate + ADP + phosphate + H(+). It catalyses the reaction L-aspartyl-tRNA(Asn) + L-glutamine + ATP + H2O = L-asparaginyl-tRNA(Asn) + L-glutamate + ADP + phosphate + 2 H(+). Its function is as follows. Allows the formation of correctly charged Asn-tRNA(Asn) or Gln-tRNA(Gln) through the transamidation of misacylated Asp-tRNA(Asn) or Glu-tRNA(Gln) in organisms which lack either or both of asparaginyl-tRNA or glutaminyl-tRNA synthetases. The reaction takes place in the presence of glutamine and ATP through an activated phospho-Asp-tRNA(Asn) or phospho-Glu-tRNA(Gln). The sequence is that of Aspartyl/glutamyl-tRNA(Asn/Gln) amidotransferase subunit B from Bacillus pumilus (strain SAFR-032).